The primary structure comprises 448 residues: tRNA modification GTPase MnmE (448 aa).

(6S)-5-formyl-5,6,7,8-tetrahydrofolate contacts are provided by R24, E81, and K120. The region spanning G216–G373 is the TrmE-type G domain. N226 contacts K(+). Residues N226–S231, T245–T251, and D270–G273 contribute to the GTP site. A Mg(2+)-binding site is contributed by S230. K(+) contacts are provided by T245, I247, and T250. T251 is a binding site for Mg(2+). K448 serves as a coordination point for (6S)-5-formyl-5,6,7,8-tetrahydrofolate.

This sequence belongs to the TRAFAC class TrmE-Era-EngA-EngB-Septin-like GTPase superfamily. TrmE GTPase family. As to quaternary structure, homodimer. Heterotetramer of two MnmE and two MnmG subunits. The cofactor is K(+).

The protein resides in the cytoplasm. Exhibits a very high intrinsic GTPase hydrolysis rate. Involved in the addition of a carboxymethylaminomethyl (cmnm) group at the wobble position (U34) of certain tRNAs, forming tRNA-cmnm(5)s(2)U34. The chain is tRNA modification GTPase MnmE from Neisseria meningitidis serogroup B (strain ATCC BAA-335 / MC58).